The following is a 345-amino-acid chain: tRNA dimethylallyltransferase (345 aa).

Residue 9 to 16 participates in ATP binding; sequence GPTASGKS. Substrate is bound at residue 11 to 16; it reads TASGKS. Interaction with substrate tRNA stretches follow at residues 34–37 and 195–199; these read DSMQ and QRMIR.

It belongs to the IPP transferase family. Monomer. Mg(2+) serves as cofactor.

It carries out the reaction adenosine(37) in tRNA + dimethylallyl diphosphate = N(6)-dimethylallyladenosine(37) in tRNA + diphosphate. Functionally, catalyzes the transfer of a dimethylallyl group onto the adenine at position 37 in tRNAs that read codons beginning with uridine, leading to the formation of N6-(dimethylallyl)adenosine (i(6)A). The sequence is that of tRNA dimethylallyltransferase from Orientia tsutsugamushi (strain Ikeda) (Rickettsia tsutsugamushi).